The chain runs to 236 residues: Cutinase (236 aa).

An N-terminal signal peptide occupies residues 1–20; it reads MSLTLFSFLSLVSILCIVTA. A disulfide bond links C66 and C143. S154 acts as the Nucleophile in catalysis. A disulfide bridge connects residues C202 and C209. D206 is a catalytic residue. H218 (proton donor/acceptor) is an active-site residue.

It belongs to the cutinase family. In terms of processing, the 2 disulfide bonds play a critical role in holding the catalytic residues in juxta-position; reduction of the disulfide bridges results in the complete inactivation of the enzyme.

It is found in the secreted. It catalyses the reaction cutin + H2O = cutin monomers.. Its function is as follows. Catalyzes the hydrolysis of complex carboxylic polyesters found in the cell wall of plants. Degrades cutin, a macromolecule that forms the structure of the plant cuticle. Allows pathogenic fungi to penetrate through the cuticular barrier into the host plant during the initial stage of fungal infection. The polypeptide is Cutinase (CUT1) (Blumeria hordei (Barley powdery mildew)).